A 202-amino-acid polypeptide reads, in one-letter code: MEKSESSTIQIAESSKDRKGKAPLLPPPVHHERAAGYKRGVAIFDLILRISAATAALAATIVMGTTEQTLPFFTQFFQFRASYDDLPTFTFFVIAMAIVTGYLILSVPFSIVCIARPVVAAPRILLILCDTLTVTLATSAAGASAAIVYLAHNGXSDANWLAICQQFNDFCQRVSGAVVAAFVSAVLLIFLVVLSAIVLKKH.

Positions 1 to 13 (MEKSESSTIQIAE) are enriched in polar residues. A disordered region spans residues 1-30 (MEKSESSTIQIAESSKDRKGKAPLLPPPVH). Topologically, residues 1 to 42 (MEKSESSTIQIAESSKDRKGKAPLLPPPVHHERAAGYKRGVA) are cytoplasmic. Residues 43–63 (IFDLILRISAATAALAATIVM) traverse the membrane as a helical segment. Over 64–90 (GTTEQTLPFFTQFFQFRASYDDLPTFT) the chain is Extracellular. The chain crosses the membrane as a helical span at residues 91–111 (FFVIAMAIVTGYLILSVPFSI). The Cytoplasmic portion of the chain corresponds to 112–130 (VCIARPVVAAPRILLILCD). The helical transmembrane segment at 131–151 (TLTVTLATSAAGASAAIVYLA) threads the bilayer. At 152–177 (HNGXSDANWLAICQQFNDFCQRVSGA) the chain is on the extracellular side. A helical transmembrane segment spans residues 178–198 (VVAAFVSAVLLIFLVVLSAIV). The Cytoplasmic segment spans residues 199–202 (LKKH).

Belongs to the Casparian strip membrane proteins (CASP) family. In terms of assembly, homodimer and heterodimers.

It localises to the cell membrane. Regulates membrane-cell wall junctions and localized cell wall deposition. Required for establishment of the Casparian strip membrane domain (CSD) and the subsequent formation of Casparian strips, a cell wall modification of the root endodermis that determines an apoplastic barrier between the intraorganismal apoplasm and the extraorganismal apoplasm and prevents lateral diffusion. The protein is Casparian strip membrane protein 1 of Triphysaria pusilla (Dwarf owl's-clover).